A 177-amino-acid chain; its full sequence is ATP synthase subunit delta (177 aa).

Belongs to the ATPase delta chain family. In terms of assembly, F-type ATPases have 2 components, F(1) - the catalytic core - and F(0) - the membrane proton channel. F(1) has five subunits: alpha(3), beta(3), gamma(1), delta(1), epsilon(1). F(0) has three main subunits: a(1), b(2) and c(10-14). The alpha and beta chains form an alternating ring which encloses part of the gamma chain. F(1) is attached to F(0) by a central stalk formed by the gamma and epsilon chains, while a peripheral stalk is formed by the delta and b chains.

The protein resides in the cell inner membrane. Its function is as follows. F(1)F(0) ATP synthase produces ATP from ADP in the presence of a proton or sodium gradient. F-type ATPases consist of two structural domains, F(1) containing the extramembraneous catalytic core and F(0) containing the membrane proton channel, linked together by a central stalk and a peripheral stalk. During catalysis, ATP synthesis in the catalytic domain of F(1) is coupled via a rotary mechanism of the central stalk subunits to proton translocation. In terms of biological role, this protein is part of the stalk that links CF(0) to CF(1). It either transmits conformational changes from CF(0) to CF(1) or is implicated in proton conduction. This is ATP synthase subunit delta from Shewanella amazonensis (strain ATCC BAA-1098 / SB2B).